A 517-amino-acid chain; its full sequence is Anthranilate--CoA ligase (517 aa).

161–172 (LQYTSGSTGAPK) is an AMP binding site.

The protein belongs to the ATP-dependent AMP-binding enzyme family. In terms of assembly, monomer.

It carries out the reaction anthranilate + ATP + CoA = anthraniloyl-CoA + AMP + diphosphate. Functionally, catalyzes the formation of anthraniloyl-CoA, which is the priming step for entry into the Pseudomonas quinolone signal (PQS) biosynthetic pathway. Also active on a variety of aromatic substrates, including benzoate and chloro and fluoro derivatives of anthranilate. In Pseudomonas aeruginosa (strain ATCC 15692 / DSM 22644 / CIP 104116 / JCM 14847 / LMG 12228 / 1C / PRS 101 / PAO1), this protein is Anthranilate--CoA ligase (pqsA).